An 87-amino-acid polypeptide reads, in one-letter code: uncharacterized protein (87 aa).

An N-terminal signal peptide occupies residues Met-1–Ala-19. Residues Leu-39 to Leu-59 traverse the membrane as a helical segment.

This sequence to M.leprae ML2453.

The protein resides in the membrane. This is an uncharacterized protein from Mycobacterium bovis (strain ATCC BAA-935 / AF2122/97).